The following is a 317-amino-acid chain: Sulfate adenylyltransferase subunit 2 (317 aa).

2 disordered regions span residues 1–21 and 298–317; these read MPDS…APLD and RAID…EGYF.

It belongs to the PAPS reductase family. CysD subfamily. In terms of assembly, heterodimer composed of CysD, the smaller subunit, and CysN.

The catalysed reaction is sulfate + ATP + H(+) = adenosine 5'-phosphosulfate + diphosphate. The protein operates within sulfur metabolism; hydrogen sulfide biosynthesis; sulfite from sulfate: step 1/3. Its function is as follows. With CysN forms the ATP sulfurylase (ATPS) that catalyzes the adenylation of sulfate producing adenosine 5'-phosphosulfate (APS) and diphosphate, the first enzymatic step in sulfur assimilation pathway. APS synthesis involves the formation of a high-energy phosphoric-sulfuric acid anhydride bond driven by GTP hydrolysis by CysN coupled to ATP hydrolysis by CysD. This chain is Sulfate adenylyltransferase subunit 2, found in Rhizobium etli (strain CIAT 652).